Here is a 221-residue protein sequence, read N- to C-terminus: Endonuclease V (221 aa).

Mg(2+) is bound by residues D43 and D111.

The protein belongs to the endonuclease V family. Mg(2+) serves as cofactor.

It is found in the cytoplasm. The catalysed reaction is Endonucleolytic cleavage at apurinic or apyrimidinic sites to products with a 5'-phosphate.. In terms of biological role, DNA repair enzyme involved in the repair of deaminated bases. Selectively cleaves double-stranded DNA at the second phosphodiester bond 3' to a deoxyinosine leaving behind the intact lesion on the nicked DNA. The sequence is that of Endonuclease V from Azotobacter vinelandii (strain DJ / ATCC BAA-1303).